Reading from the N-terminus, the 286-residue chain is uncharacterized protein (286 aa).

It belongs to the methyltransferase superfamily.

Involved in osmoadaptation. This is an uncharacterized protein from Emericella nidulans (strain FGSC A4 / ATCC 38163 / CBS 112.46 / NRRL 194 / M139) (Aspergillus nidulans).